The sequence spans 391 residues: Small ribosomal subunit protein bS1 (391 aa).

4 S1 motif domains span residues 16-90 (GDKV…LSRR), 108-173 (NEII…LSRK), 194-262 (GDVI…LSIK), and 279-348 (NDVI…LSIK).

Belongs to the bacterial ribosomal protein bS1 family.

Functionally, binds mRNA; thus facilitating recognition of the initiation point. It is needed to translate mRNA with a short Shine-Dalgarno (SD) purine-rich sequence. In Staphylococcus aureus (strain N315), this protein is Small ribosomal subunit protein bS1 (rpsA).